Here is a 448-residue protein sequence, read N- to C-terminus: B-cell lymphoma 3 protein homolog (448 aa).

The disordered stretch occupies residues 1 to 54 (MPRCPAGAMDEGPVDLRTRPKGTPGAALPLRKRPLRPASPEPATTRSPAGPLDA). Residue S39 is modified to Phosphoserine. ANK repeat units follow at residues 129–161 (DGDTPLHIAVVQNNIAAVYRILSLFKLGSREVD), 166–195 (LRQTPLHLAVITTLPDMVRLLVTAGASPMA), 199–228 (HGQTAIHLACEHRSPSCLQALLDSATSGSV), 236–265 (EGLTALHVAVNTGCQEAVLLLLERGADIDA), 270–299 (SGRSPLIHAVENNSLNMVQLLLLHGANVNA), 303–332 (SGSSALHSASGRGLLPLVRTLVRSGADSGL), and 333–362 (KNCHNDTPLMVARSRRVIDILRGKASRAAS). A disordered region spans residues 356 to 448 (KASRAASGSQ…VPPSPAPGSS (93 aa)). A compositionally biased stretch (polar residues) spans 361-376 (ASGSQPEPSPDQSATN). At S369 the chain carries Phosphoserine. The segment covering 377–398 (SPESSSRLSSNGLQSSPSSSPS) has biased composition (low complexity). S396 and S400 each carry phosphoserine; by GSK3. The span at 411-423 (TPQNFFLPTTSTP) shows a compositional bias: polar residues. Positions 425-436 (FLPFPGVLRGPG) are enriched in low complexity. The span at 437–448 (RPVPPSPAPGSS) shows a compositional bias: pro residues.

Component of a complex consisting of the NF-kappa-B p52-p52 homodimer and BCL3. Component of a complex consisting of the NF-kappa-B p50-p50 homodimer and BCL3. Interacts with N4BP2, COPS5 and PIR. Interacts with CYLD. Polyubiquitinated. Ubiquitination via 'Lys-63'-linked ubiquitin chains is required for nuclear accumulation. Deubiquitinated by CYLD, which acts on 'Lys-63'-linked ubiquitin chains. Deubiquitination by CYLD prevents nuclear accumulation. In terms of processing, activated by phosphorylation.

Its subcellular location is the nucleus. It is found in the cytoplasm. The protein localises to the perinuclear region. Its function is as follows. Contributes to the regulation of transcriptional activation of NF-kappa-B target genes. In the cytoplasm, inhibits the nuclear translocation of the NF-kappa-B p50 subunit. In the nucleus, acts as a transcriptional activator that promotes transcription of NF-kappa-B target genes. Contributes to the regulation of cell proliferation. This Mus musculus (Mouse) protein is B-cell lymphoma 3 protein homolog (Bcl3).